A 396-amino-acid chain; its full sequence is S-adenosylmethionine synthase (396 aa).

Residue His15 participates in ATP binding. Asp17 lines the Mg(2+) pocket. Glu43 contacts K(+). Glu56 and Gln99 together coordinate L-methionine. The segment at Gln99 to Arg109 is flexible loop. Residues Asp175–Lys177, Arg241–Phe242, Asp250, Arg256–Lys257, Ser273, and Lys277 contribute to the ATP site. L-methionine is bound at residue Asp250. Position 281 (Lys281) interacts with L-methionine.

Belongs to the AdoMet synthase family. In terms of assembly, homotetramer; dimer of dimers. The cofactor is Mg(2+). Requires K(+) as cofactor.

It localises to the cytoplasm. It carries out the reaction L-methionine + ATP + H2O = S-adenosyl-L-methionine + phosphate + diphosphate. The protein operates within amino-acid biosynthesis; S-adenosyl-L-methionine biosynthesis; S-adenosyl-L-methionine from L-methionine: step 1/1. Functionally, catalyzes the formation of S-adenosylmethionine (AdoMet) from methionine and ATP. The overall synthetic reaction is composed of two sequential steps, AdoMet formation and the subsequent tripolyphosphate hydrolysis which occurs prior to release of AdoMet from the enzyme. This is S-adenosylmethionine synthase from Pelotomaculum thermopropionicum (strain DSM 13744 / JCM 10971 / SI).